The following is a 316-amino-acid chain: Ribosomal RNA small subunit methyltransferase H (316 aa).

S-adenosyl-L-methionine is bound by residues 35–37, Asp-55, Phe-79, Asp-101, and Gln-108; that span reads GGH.

Belongs to the methyltransferase superfamily. RsmH family.

Its subcellular location is the cytoplasm. It carries out the reaction cytidine(1402) in 16S rRNA + S-adenosyl-L-methionine = N(4)-methylcytidine(1402) in 16S rRNA + S-adenosyl-L-homocysteine + H(+). Functionally, specifically methylates the N4 position of cytidine in position 1402 (C1402) of 16S rRNA. This chain is Ribosomal RNA small subunit methyltransferase H, found in Vibrio vulnificus (strain CMCP6).